Consider the following 267-residue polypeptide: MAQNRITRLMQQQKKLLIAYYMPEFPVAGATLPVLEALQEHGADIIELGIPYSDPIGDGPVIQNAAHTAIRNGVTLRKVLELVRKARNGEGCKKITVPIVLMGYSNPLFAYGGDCFLADAIDSGVDGVLIPDFPPEEAIDYLDRAKNVGLSVIFLIAPVTSPERIEFIDSLSTDFSYCLAVNATTGTAKLSGHAGDAAVEEYLHRVRQHTKKKFVVGFGIRDKERVESMWKLADGAVVGTALLEQLAASTTPQECAERAGTFWQSLR.

Catalysis depends on proton acceptor residues Glu47 and Asp58.

It belongs to the TrpA family. As to quaternary structure, tetramer of two alpha and two beta chains.

The enzyme catalyses (1S,2R)-1-C-(indol-3-yl)glycerol 3-phosphate + L-serine = D-glyceraldehyde 3-phosphate + L-tryptophan + H2O. The protein operates within amino-acid biosynthesis; L-tryptophan biosynthesis; L-tryptophan from chorismate: step 5/5. Functionally, the alpha subunit is responsible for the aldol cleavage of indoleglycerol phosphate to indole and glyceraldehyde 3-phosphate. This is Tryptophan synthase alpha chain from Chlorobium chlorochromatii (strain CaD3).